The following is a 320-amino-acid chain: Cytochrome f (320 aa).

An N-terminal signal peptide occupies residues 1 to 35 (MQTRNNFSWIKEQITRSISVSLMIYIITRASISNA). The heme site is built by Tyr-36, Cys-56, Cys-59, and His-60. A helical membrane pass occupies residues 286-306 (VQGLLFFLASVILAQIFLVLK).

This sequence belongs to the cytochrome f family. In terms of assembly, the 4 large subunits of the cytochrome b6-f complex are cytochrome b6, subunit IV (17 kDa polypeptide, petD), cytochrome f and the Rieske protein, while the 4 small subunits are PetG, PetL, PetM and PetN. The complex functions as a dimer. Heme is required as a cofactor.

It localises to the plastid. The protein resides in the chloroplast thylakoid membrane. In terms of biological role, component of the cytochrome b6-f complex, which mediates electron transfer between photosystem II (PSII) and photosystem I (PSI), cyclic electron flow around PSI, and state transitions. This is Cytochrome f from Lactuca sativa (Garden lettuce).